Reading from the N-terminus, the 374-residue chain is Phosphoserine aminotransferase (374 aa).

An L-glutamate-binding site is contributed by Arg-46. Residues 80–81 (AT), Phe-104, Thr-150, Asp-174, and Gln-197 each bind pyridoxal 5'-phosphate. Lys-198 is modified (N6-(pyridoxal phosphate)lysine). 249–250 (NT) is a binding site for pyridoxal 5'-phosphate.

The protein belongs to the class-V pyridoxal-phosphate-dependent aminotransferase family. SerC subfamily. Homodimer. Requires pyridoxal 5'-phosphate as cofactor.

The protein resides in the cytoplasm. The enzyme catalyses O-phospho-L-serine + 2-oxoglutarate = 3-phosphooxypyruvate + L-glutamate. It carries out the reaction 4-(phosphooxy)-L-threonine + 2-oxoglutarate = (R)-3-hydroxy-2-oxo-4-phosphooxybutanoate + L-glutamate. It participates in amino-acid biosynthesis; L-serine biosynthesis; L-serine from 3-phospho-D-glycerate: step 2/3. It functions in the pathway cofactor biosynthesis; pyridoxine 5'-phosphate biosynthesis; pyridoxine 5'-phosphate from D-erythrose 4-phosphate: step 3/5. Catalyzes the reversible conversion of 3-phosphohydroxypyruvate to phosphoserine and of 3-hydroxy-2-oxo-4-phosphonooxybutanoate to phosphohydroxythreonine. The protein is Phosphoserine aminotransferase of Nocardioides sp. (strain ATCC BAA-499 / JS614).